Here is a 110-residue protein sequence, read N- to C-terminus: Large ribosomal subunit protein uL22 (110 aa).

This sequence belongs to the universal ribosomal protein uL22 family. As to quaternary structure, part of the 50S ribosomal subunit.

Its function is as follows. This protein binds specifically to 23S rRNA; its binding is stimulated by other ribosomal proteins, e.g. L4, L17, and L20. It is important during the early stages of 50S assembly. It makes multiple contacts with different domains of the 23S rRNA in the assembled 50S subunit and ribosome. In terms of biological role, the globular domain of the protein is located near the polypeptide exit tunnel on the outside of the subunit, while an extended beta-hairpin is found that lines the wall of the exit tunnel in the center of the 70S ribosome. This chain is Large ribosomal subunit protein uL22, found in Desulfotalea psychrophila (strain LSv54 / DSM 12343).